Consider the following 371-residue polypeptide: Choline kinase B1 (371 aa).

This sequence belongs to the choline/ethanolamine kinase family. Requires Mg(2+) as cofactor.

It catalyses the reaction choline + ATP = phosphocholine + ADP + H(+). The polypeptide is Choline kinase B1 (ckb-1) (Caenorhabditis elegans).